The chain runs to 331 residues: MARLYYDADANLDLLANKTVAIIGYGSQGHAHALNLKDSGVQVIVGLYEGSKSAAKAQEAGLTVKSAADAAKAADLIMILLPDEVQRTVYTQDIQPHLSADKVLAFAHGFNIHFAQVVPPSDVDVVMVAPKGPGHLVRRTYTQGQGVPCLFAVYQDASGQARDRAMAYAKGIGGTRAGILETTFREETETDLFGEQAVLCGGLTALIKAGFETLVEAGYQPELAYFECMHEVKLIVDLIVEGGLAKMRDSISNTAEYGDYTRGPRIVDDRTKAEMRRVLHEIQTGQFAKEFVLENMSGKAGFTATRRRESEHAIEEVGKDLRAMFSWTDKA.

The KARI N-terminal Rossmann domain occupies 2 to 182; the sequence is ARLYYDADAN…GGTRAGILET (181 aa). Residues 25–28, Ser51, Ser53, and 83–86 each bind NADP(+); these read YGSQ and DEVQ. His108 is an active-site residue. An NADP(+)-binding site is contributed by Gly134. The region spanning 183 to 328 is the KARI C-terminal knotted domain; the sequence is TFREETETDL…KDLRAMFSWT (146 aa). Positions 191, 195, 227, and 231 each coordinate Mg(2+). Ser252 contacts substrate.

Belongs to the ketol-acid reductoisomerase family. It depends on Mg(2+) as a cofactor.

The catalysed reaction is (2R)-2,3-dihydroxy-3-methylbutanoate + NADP(+) = (2S)-2-acetolactate + NADPH + H(+). It catalyses the reaction (2R,3R)-2,3-dihydroxy-3-methylpentanoate + NADP(+) = (S)-2-ethyl-2-hydroxy-3-oxobutanoate + NADPH + H(+). The protein operates within amino-acid biosynthesis; L-isoleucine biosynthesis; L-isoleucine from 2-oxobutanoate: step 2/4. It participates in amino-acid biosynthesis; L-valine biosynthesis; L-valine from pyruvate: step 2/4. In terms of biological role, involved in the biosynthesis of branched-chain amino acids (BCAA). Catalyzes an alkyl-migration followed by a ketol-acid reduction of (S)-2-acetolactate (S2AL) to yield (R)-2,3-dihydroxy-isovalerate. In the isomerase reaction, S2AL is rearranged via a Mg-dependent methyl migration to produce 3-hydroxy-3-methyl-2-ketobutyrate (HMKB). In the reductase reaction, this 2-ketoacid undergoes a metal-dependent reduction by NADPH to yield (R)-2,3-dihydroxy-isovalerate. This chain is Ketol-acid reductoisomerase (NADP(+)), found in Acaryochloris marina (strain MBIC 11017).